An 87-amino-acid polypeptide reads, in one-letter code: U3-theraphotoxin-Hhn1i (87 aa).

The signal sequence occupies residues methionine 1–alanine 24. Positions serine 25–arginine 52 are excised as a propeptide. Cystine bridges form between cysteine 54–cysteine 67, cysteine 61–cysteine 72, and cysteine 66–cysteine 79.

This sequence belongs to the neurotoxin 10 (Hwtx-1) family. 51 (Hntx-8) subfamily. Hntx-8 sub-subfamily. As to expression, expressed by the venom gland.

It localises to the secreted. In terms of biological role, ion channel inhibitor. The chain is U3-theraphotoxin-Hhn1i from Cyriopagopus hainanus (Chinese bird spider).